Reading from the N-terminus, the 292-residue chain is GTP cyclohydrolase FolE2 (292 aa).

Belongs to the GTP cyclohydrolase IV family.

It carries out the reaction GTP + H2O = 7,8-dihydroneopterin 3'-triphosphate + formate + H(+). Its pathway is cofactor biosynthesis; 7,8-dihydroneopterin triphosphate biosynthesis; 7,8-dihydroneopterin triphosphate from GTP: step 1/1. Functionally, converts GTP to 7,8-dihydroneopterin triphosphate. This chain is GTP cyclohydrolase FolE2, found in Staphylococcus haemolyticus (strain JCSC1435).